A 263-amino-acid chain; its full sequence is Methylesterase 1 (263 aa).

The Acyl-ester intermediate role is filled by S85. Residues D213 and H241 each act as charge relay system in the active site.

The protein belongs to the AB hydrolase superfamily. Methylesterase family.

The catalysed reaction is methyl (indol-3-yl)acetate + H2O = (indol-3-yl)acetate + methanol + H(+). The enzyme catalyses methyl (-)-jasmonate + H2O = jasmonate + methanol + H(+). It catalyses the reaction methyl salicylate + H2O = salicylate + methanol + H(+). It participates in plant hormone biosynthesis. The protein operates within lipid metabolism; oxylipin biosynthesis. Its activity is regulated as follows. Esterase activity is down-regulated by salicylic acid (SA). Methylesterase shown to have carboxylesterase activity, methyl indole-3-acetic acid (MeIAA) esterase activity, methyl salicylate (MeSA) esterase activity and methyl jasmonate (MeJA) esterase activity in vitro. Required to convert methyl salicylate (MeSA) to salicylic acid (SA) as part of the signal transduction pathways that activate systemic acquired resistance in systemic tissue. MeSA is believed to be an inactive form that needs to be demethylated to exert a biological effect. This chain is Methylesterase 1, found in Arabidopsis thaliana (Mouse-ear cress).